Consider the following 286-residue polypeptide: NH(3)-dependent NAD(+) synthetase (286 aa).

43 to 50 (GVSGGVDS) is an ATP binding site. Residue D49 coordinates Mg(2+). R131 is a binding site for deamido-NAD(+). T151 is a binding site for ATP. Position 156 (E156) interacts with Mg(2+). Positions 164 and 171 each coordinate deamido-NAD(+). Positions 180 and 202 each coordinate ATP. Positions 257-286 (HEASSHKRSPPASPDLGEIKKHYKQHAGKK) are disordered. A deamido-NAD(+)-binding site is contributed by 262–263 (HK). Basic residues predominate over residues 277-286 (KHYKQHAGKK).

Belongs to the NAD synthetase family. In terms of assembly, homodimer.

The catalysed reaction is deamido-NAD(+) + NH4(+) + ATP = AMP + diphosphate + NAD(+) + H(+). Its pathway is cofactor biosynthesis; NAD(+) biosynthesis; NAD(+) from deamido-NAD(+) (ammonia route): step 1/1. Its function is as follows. Catalyzes the ATP-dependent amidation of deamido-NAD to form NAD. Uses ammonia as a nitrogen source. This is NH(3)-dependent NAD(+) synthetase from Aeropyrum pernix (strain ATCC 700893 / DSM 11879 / JCM 9820 / NBRC 100138 / K1).